We begin with the raw amino-acid sequence, 348 residues long: Pheromone P-factor receptor (348 aa).

7 helical membrane passes run 46–69 (LLTG…VCLL), 79–103 (VFVF…TICS), 125–141 (VFNI…IFTA), 162–180 (IMTV…FWIT), 207–225 (YFIA…SGVF), 249–267 (CILV…FTII), and 283–301 (CLLI…STAL).

It belongs to the G-protein coupled receptor 4 family.

Its subcellular location is the membrane. Functionally, receptor for the peptide pheromone P-factor, a mating factor of S.pombe. Pheromone signaling is essential for initiation of meiosis in S.pombe; P-factor signaling alone may be sufficient. In Schizosaccharomyces pombe (strain 972 / ATCC 24843) (Fission yeast), this protein is Pheromone P-factor receptor (mam2).